A 502-amino-acid polypeptide reads, in one-letter code: Bifunctional purine biosynthesis protein PurH (502 aa).

An MGS-like domain is found at 1–144 (MKKRALISVF…KNFQDVVVIS (144 aa)).

Belongs to the PurH family.

The enzyme catalyses (6R)-10-formyltetrahydrofolate + 5-amino-1-(5-phospho-beta-D-ribosyl)imidazole-4-carboxamide = 5-formamido-1-(5-phospho-D-ribosyl)imidazole-4-carboxamide + (6S)-5,6,7,8-tetrahydrofolate. The catalysed reaction is IMP + H2O = 5-formamido-1-(5-phospho-D-ribosyl)imidazole-4-carboxamide. The protein operates within purine metabolism; IMP biosynthesis via de novo pathway; 5-formamido-1-(5-phospho-D-ribosyl)imidazole-4-carboxamide from 5-amino-1-(5-phospho-D-ribosyl)imidazole-4-carboxamide (10-formyl THF route): step 1/1. Its pathway is purine metabolism; IMP biosynthesis via de novo pathway; IMP from 5-formamido-1-(5-phospho-D-ribosyl)imidazole-4-carboxamide: step 1/1. In Clostridium beijerinckii (strain ATCC 51743 / NCIMB 8052) (Clostridium acetobutylicum), this protein is Bifunctional purine biosynthesis protein PurH.